A 446-amino-acid polypeptide reads, in one-letter code: NAD kinase (446 aa).

Phosphoserine occurs at positions 46, 48, 50, 55, and 64.

The protein belongs to the NAD kinase family. It depends on a divalent metal cation as a cofactor. Widely expressed but not detected in skeletal muscle.

It carries out the reaction NAD(+) + ATP = ADP + NADP(+) + H(+). The sequence is that of NAD kinase (NADK) from Homo sapiens (Human).